Consider the following 444-residue polypeptide: Pestheic acid cluster transcriptional regulator 2 (444 aa).

Polar residues predominate over residues 1 to 22 (MEAADPNNNLTITSPSTLLSNP). Residues 1-31 (MEAADPNNNLTITSPSTLLSNPTQPPAQPLK) form a disordered region. The segment at residues 36 to 63 (CHACASSKVKCHKEKPTCSRCRKRGITC) is a DNA-binding region (zn(2)-C6 fungal-type). Residues 326 to 348 (ARVGSGVSTHTTAGQYEPQVEQQ) form a disordered region. Over residues 331 to 348 (GVSTHTTAGQYEPQVEQQ) the composition is skewed to polar residues.

The protein resides in the nucleus. Transcription factor that, with ptaR1 and ptaR3, coregulates the expression of the gene cluster that mediates the biosynthesis of pestheic acid, a diphenyl ether which is a biosynthetic precursor of the unique chloropupukeananes. This Pestalotiopsis fici (strain W106-1 / CGMCC3.15140) protein is Pestheic acid cluster transcriptional regulator 2.